The chain runs to 234 residues: Riboflavin kinase (234 aa).

The interval M1–V98 is H-T-H motif-like. The riboflavin kinase stretch occupies residues V99–E234. G108–R113 is a binding site for CDP. Mg(2+) contacts are provided by T137 and N139. 2 residues coordinate FMN: T199 and E207. E212 to R215 is a binding site for CDP.

The protein belongs to the archaeal riboflavin kinase family. The cofactor is Mg(2+).

The enzyme catalyses riboflavin + CTP = CDP + FMN + H(+). Its pathway is cofactor biosynthesis; FMN biosynthesis; FMN from riboflavin (CTP route): step 1/1. Functionally, catalyzes the CTP-dependent phosphorylation of riboflavin (vitamin B2) to form flavin mononucleotide (FMN). The protein is Riboflavin kinase (ribK) of Haloquadratum walsbyi (strain DSM 16790 / HBSQ001).